Consider the following 239-residue polypeptide: Mediator of RNA polymerase II transcription subunit 4 (239 aa).

Residues 168–221 are disordered; the sequence is QLFSEQPPKTNEPTETETEIDANKAVEEKTKMNYPASPTFTTQEENKEVESPAN. A compositionally biased stretch (basic and acidic residues) spans 188-198; it reads DANKAVEEKTK. Residues S204 and S218 each carry the phosphoserine modification.

It belongs to the Mediator complex subunit 4 family. Component of the Mediator complex.

The protein resides in the nucleus. Functionally, component of the Mediator complex, a coactivator involved in the regulated transcription of nearly all RNA polymerase II-dependent genes. Mediator functions as a bridge to convey information from gene-specific regulatory proteins to the basal RNA polymerase II transcription machinery. Mediator is recruited to promoters by direct interactions with regulatory proteins and serves as a scaffold for the assembly of a functional preinitiation complex with RNA polymerase II and the general transcription factors. This is Mediator of RNA polymerase II transcription subunit 4 (med4) from Schizosaccharomyces pombe (strain 972 / ATCC 24843) (Fission yeast).